A 161-amino-acid chain; its full sequence is Probable calcium-binding protein CML16 (161 aa).

4 consecutive EF-hand domains span residues 8–43, 44–79, 83–118, and 119–154; these read DQIKQLKDIFARFDMDKDGSLTQLELAALLRSLGIK, PRGDQISLLLNQIDRNGNGSVEFDELVVAILPDINE, INQEQLMEVFRSFDRDGNGSITAAELAGSMAKMGHP, and LTYRELTEMMTEADSNGDGVISFNEFSHIMAKSAAD. Positions 21, 23, 25, 27, 32, 57, 59, 61, 63, 68, 96, 98, 100, 102, 107, 132, 134, 136, and 143 each coordinate Ca(2+).

Potential calcium sensor. The sequence is that of Probable calcium-binding protein CML16 (CML16) from Arabidopsis thaliana (Mouse-ear cress).